The sequence spans 864 residues: DNA double-strand break repair Rad50 ATPase (864 aa).

ATP contacts are provided by residues 32–38 (NGAGKSS) and Q131. Coiled-coil stretches lie at residues 176-319 (RELD…EKAI) and 376-413 (DIDK…EKNE). The region spanning 380 to 478 (VNSLEQKVEE…ELNKIEREYR (99 aa)) is the Zinc-hook domain. Residues C426 and C429 each coordinate Zn(2+). The stretch at 440–697 (KIIKEAKSYI…DREKIINAIN (258 aa)) forms a coiled coil.

It belongs to the SMC family. RAD50 subfamily. Homodimer. Forms a heterotetramer composed of two Mre11 subunits and two Rad50 subunits. The cofactor is Zn(2+).

Part of the Rad50/Mre11 complex, which is involved in the early steps of DNA double-strand break (DSB) repair. The complex may facilitate opening of the processed DNA ends to aid in the recruitment of HerA and NurA. Rad50 controls the balance between DNA end bridging and DNA resection via ATP-dependent structural rearrangements of the Rad50/Mre11 complex. The sequence is that of DNA double-strand break repair Rad50 ATPase from Saccharolobus solfataricus (strain ATCC 35092 / DSM 1617 / JCM 11322 / P2) (Sulfolobus solfataricus).